The following is an 81-amino-acid chain: Large ribosomal subunit protein bL31B (81 aa).

Belongs to the bacterial ribosomal protein bL31 family. Type B subfamily. In terms of assembly, part of the 50S ribosomal subunit.

The chain is Large ribosomal subunit protein bL31B from Borrelia garinii subsp. bavariensis (strain ATCC BAA-2496 / DSM 23469 / PBi) (Borreliella bavariensis).